The primary structure comprises 431 residues: Homogentisate 1,2-dioxygenase (431 aa).

Residue His286 is the Proton acceptor of the active site. His329 and Glu335 together coordinate Fe cation. Homogentisate is bound by residues Tyr344 and His365. His365 is a Fe cation binding site.

The protein belongs to the homogentisate dioxygenase family. In terms of assembly, hexamer; dimer of trimers. Fe cation is required as a cofactor.

The enzyme catalyses homogentisate + O2 = 4-maleylacetoacetate + H(+). It participates in amino-acid degradation; L-phenylalanine degradation; acetoacetate and fumarate from L-phenylalanine: step 4/6. Its function is as follows. Involved in the catabolism of homogentisate (2,5-dihydroxyphenylacetate or 2,5-OH-PhAc), a central intermediate in the degradation of phenylalanine and tyrosine. Catalyzes the oxidative ring cleavage of the aromatic ring of homogentisate to yield maleylacetoacetate. The polypeptide is Homogentisate 1,2-dioxygenase (Pseudomonas fluorescens (strain Pf0-1)).